The sequence spans 707 residues: MAP kinase-interacting serine/threonine-protein kinase mnk-1 (707 aa).

Residues 1–24 are compositionally biased toward polar residues; it reads MFFLDNTDSMTSSSRGITMPNTIS. Disordered stretches follow at residues 1-29 and 101-131; these read MFFLDNTDSMTSSSRGITMPNTISSHEDV and RQRERETYEDEDVLSSSDESSGRPIPRYVGR. A Protein kinase domain is found at 203 to 493; sequence KLTDEHLGSG…ADQILSHRWL (291 aa). ATP contacts are provided by residues 209–217 and Lys-232; that span reads LGSGAYGSV. The active-site Proton acceptor is Asp-325. 2 disordered regions span residues 589-628 and 688-707; these read RSGEFTPPISRASPTTPPPSMLNLSEDLTDSPVKRRSADD and FEDEQENANPIHRIETQVNV.

The protein belongs to the protein kinase superfamily. CAMK Ser/Thr protein kinase family. Mg(2+) serves as cofactor. In terms of tissue distribution, expressed in pharynx, intestine, vulva and body wall muscles.

It is found in the nucleus. The protein resides in the cytoplasm. It catalyses the reaction L-seryl-[protein] + ATP = O-phospho-L-seryl-[protein] + ADP + H(+). The enzyme catalyses L-threonyl-[protein] + ATP = O-phospho-L-threonyl-[protein] + ADP + H(+). Functionally, serine/threonine-protein kinase which is required in the germline to positively regulate lifespan. May play a role in body wall muscle contraction. May be involved in embryonic cytokinesis. This is MAP kinase-interacting serine/threonine-protein kinase mnk-1 from Caenorhabditis elegans.